Consider the following 344-residue polypeptide: MLLSKLVDLIKSGNSNFIKANIFENIDIQNAASLDVASKNQISFLEENNILKENLGRTAVSAIITFNNSEILGLLESKNISNIVVENPRIAFAEVLNYLYEQINFNPGIDDSVVMKESSKLGENCYLGPNVYIGENTVIGNNNKIFPGTTILGNVRLGDNNIIHPNCVIYENTRIENNCVINSNTVIGSEGFGFIPQDGKWIKMPQKGSVIIKSFVEIGTNCCVDRPSVGNTLIDEGTKIDNLVQIGHGVKIGKNCALAAQVGIAGGAVIGDGVILAGQVGVNNRVKVGNNVIASSKCGIHCDIEDGEVVSGFPAMKNKSWLRSSSIFKKLPELAKKLRQLDKK.

The active-site Proton acceptor is His248.

The protein belongs to the transferase hexapeptide repeat family. LpxD subfamily. In terms of assembly, homotrimer.

It carries out the reaction a UDP-3-O-[(3R)-3-hydroxyacyl]-alpha-D-glucosamine + a (3R)-hydroxyacyl-[ACP] = a UDP-2-N,3-O-bis[(3R)-3-hydroxyacyl]-alpha-D-glucosamine + holo-[ACP] + H(+). Its pathway is bacterial outer membrane biogenesis; LPS lipid A biosynthesis. In terms of biological role, catalyzes the N-acylation of UDP-3-O-acylglucosamine using 3-hydroxyacyl-ACP as the acyl donor. Is involved in the biosynthesis of lipid A, a phosphorylated glycolipid that anchors the lipopolysaccharide to the outer membrane of the cell. This Prochlorococcus marinus (strain MIT 9515) protein is UDP-3-O-acylglucosamine N-acyltransferase.